Reading from the N-terminus, the 188-residue chain is Elongation factor P-like protein (188 aa).

It belongs to the elongation factor P family.

In Vibrio campbellii (strain ATCC BAA-1116), this protein is Elongation factor P-like protein.